The following is a 293-amino-acid chain: Phospholipid scramblase 2 (293 aa).

The disordered stretch occupies residues 1–39 (MDKQNVQMNPPHPGTNLTGPPGHIGYPGPQAGYAVPPPG). The proline-rich domain (PRD) stretch occupies residues 1–66 (MDKQNVQMNP…GHPGAPTQVP (66 aa)). Residues 1–270 (MDKQNVQMNP…IQFPLDLDVK (270 aa)) lie on the Cytoplasmic side of the membrane. Thr143 bears the Phosphothreonine; by PKC mark. 4 S-palmitoyl cysteine lipidation sites follow: Cys166, Cys167, Cys170, and Cys171. Residues 271 to 287 (MKAVMLGACFLIDFMFF) traverse the membrane as a helical segment. Residues 288–293 (EMTRGE) are Extracellular-facing.

This sequence belongs to the phospholipid scramblase family. Requires Ca(2+) as cofactor.

The protein resides in the membrane. The enzyme catalyses a 1,2-diacyl-sn-glycero-3-phosphocholine(in) = a 1,2-diacyl-sn-glycero-3-phosphocholine(out). Its function is as follows. May catalyze calcium-induced ATP-independent rapid bidirectional and non-specific movement of phospholipids (lipid scrambling or lipid flip-flop) between the inner and outer leaflet of the plasma membrane. The chain is Phospholipid scramblase 2 from Bos taurus (Bovine).